The sequence spans 398 residues: Proteasome-activating nucleotidase (398 aa).

A coiled-coil region spans residues 18-59 (IMYLKKRIRQLELQVRTLEADKERLERELSRLRMEMSRLRQP). ATP-binding positions include 183–188 (GCGKTL) and His322. Residues 396-398 (MYG) are docks into pockets in the proteasome alpha-ring to cause gate opening.

It belongs to the AAA ATPase family. As to quaternary structure, homohexamer. The hexameric complex has a two-ring architecture resembling a top hat that caps the 20S proteasome core at one or both ends. Upon ATP-binding, the C-terminus of PAN interacts with the alpha-rings of the proteasome core by binding to the intersubunit pockets.

It localises to the cytoplasm. Functionally, ATPase which is responsible for recognizing, binding, unfolding and translocation of substrate proteins into the archaeal 20S proteasome core particle. Is essential for opening the gate of the 20S proteasome via an interaction with its C-terminus, thereby allowing substrate entry and access to the site of proteolysis. Thus, the C-termini of the proteasomal ATPase function like a 'key in a lock' to induce gate opening and therefore regulate proteolysis. Unfolding activity requires energy from ATP hydrolysis, whereas ATP binding alone promotes ATPase-20S proteasome association which triggers gate opening, and supports translocation of unfolded substrates. This Thermococcus onnurineus (strain NA1) protein is Proteasome-activating nucleotidase.